A 391-amino-acid polypeptide reads, in one-letter code: RNA-binding motif protein, X chromosome (391 aa).

An N-acetylmethionine; in Heterogeneous nuclear ribonucleoprotein G; alternate modification is found at Met-1. Val-2 is subject to N-acetylvaline; in Heterogeneous nuclear ribonucleoprotein G, N-terminally processed. The 79-residue stretch at 8–86 (GKLFIGGLNT…KAIKVEQATK (79 aa)) folds into the RRM domain. Residue Lys-22 forms a Glycyl lysine isopeptide (Lys-Gly) (interchain with G-Cter in SUMO2) linkage. An N6-acetyllysine modification is found at Lys-30. Positions 61–80 (DAKDAARDMNGKSLDGKAIK) are enriched in basic and acidic residues. Residues 61–391 (DAKDAARDMN…SDRGGGRSRY (331 aa)) are disordered. Glycyl lysine isopeptide (Lys-Gly) (interchain with G-Cter in SUMO2) cross-links involve residues Lys-80 and Lys-86. Ser-88 and Ser-91 each carry phosphoserine. The span at 109-120 (LRGGRGGSGGTR) shows a compositional bias: gly residues. Arg-125, Arg-144, and Arg-164 each carry omega-N-methylarginine. Over residues 151 to 164 (RGPPPRSGGPPPKR) the composition is skewed to pro residues. Ser-165 bears the Phosphoserine mark. Arg-172 is modified (omega-N-methylarginine). Ser-174 is subject to Phosphoserine. Residues 186–236 (GRDSYGGPPRREPLPSRRDVYLSPRDDGYSTKDSYSSRDYPSSRDTRDYAP) are necessary for the association to nascent RNAPII transcripts and nuclear localization. Basic and acidic residues-rich tracts occupy residues 194–215 (PRRE…DGYS) and 241–274 (YTYR…DYSD). Residues Ser-261, Ser-328, Ser-329, Ser-330, and Ser-332 each carry the phosphoserine modification. A compositionally biased stretch (low complexity) spans 323 to 337 (SRDSYSSSRSDLYSS). Residues 333-391 (DLYSSGRDRVGRQERGLPPSMERGYPPPRDSYSSSSRGAPRGGGRGGSRSDRGGGRSRY) form a necessary for RNA-binding region. The span at 338–347 (GRDRVGRQER) shows a compositional bias: basic and acidic residues. At Ser-352 the chain carries Phosphoserine. A compositionally biased stretch (low complexity) spans 362-371 (DSYSSSSRGA). Basic and acidic residues predominate over residues 380 to 391 (SRSDRGGGRSRY).

As to quaternary structure, homomultimer. Found in the supraspliceosome complex. Identified in the spliceosome C complex. Forms a complex with ILF2, ILF3, YLPM1, KHDRBS1, NCOA5 and PPP1CA. Interacts with CLK2, KHDRBS2, KHDRBS3, SAFB/SAFB1, TRA2B and YTHDC1. Interacts with ERAP1; the interaction is RNA-independent. Interacts with PPIA/CYPA. In terms of processing, O-glycosylated. Arg-185 is dimethylated, probably to asymmetric dimethylarginine.

The protein resides in the nucleus. Functionally, RNA-binding protein that plays several role in the regulation of pre- and post-transcriptional processes. Implicated in tissue-specific regulation of gene transcription and alternative splicing of several pre-mRNAs. Binds to and stimulates transcription from the tumor suppressor TXNIP gene promoter; may thus be involved in tumor suppression. When associated with SAFB, binds to and stimulates transcription from the SREBF1 promoter. Associates with nascent mRNAs transcribed by RNA polymerase II. Component of the supraspliceosome complex that regulates pre-mRNA alternative splice site selection. Can either activate or suppress exon inclusion; acts additively with TRA2B to promote exon 7 inclusion of the survival motor neuron SMN2. Represses the splicing of MAPT/Tau exon 10. Binds preferentially to single-stranded 5'-CC[A/C]-rich RNA sequence motifs localized in a single-stranded conformation; probably binds RNA as a homodimer. Binds non-specifically to pre-mRNAs. Also plays a role in the cytoplasmic TNFR1 trafficking pathways; promotes both the IL-1-beta-mediated inducible proteolytic cleavage of TNFR1 ectodomains and the release of TNFR1 exosome-like vesicles to the extracellular compartment. This chain is RNA-binding motif protein, X chromosome (RBMX), found in Pan troglodytes (Chimpanzee).